The chain runs to 210 residues: HTH-type transcriptional repressor FabR (210 aa).

The HTH tetR-type domain occupies 10 to 70 (KTRRSLVEAA…TMVDESGLML (61 aa)). Residues 33-52 (SLREVAREAGIAPTSFYRHF) constitute a DNA-binding region (H-T-H motif).

As to quaternary structure, homodimer.

The protein resides in the cytoplasm. In terms of biological role, represses the transcription of fabB, involved in unsaturated fatty acid (UFA) biosynthesis. By controlling UFA production, FabR directly influences the physical properties of the membrane bilayer. This Salmonella paratyphi A (strain ATCC 9150 / SARB42) protein is HTH-type transcriptional repressor FabR.